Reading from the N-terminus, the 205-residue chain is Small ribosomal subunit protein uS4 (205 aa).

Over residues 1 to 16 the composition is skewed to basic and acidic residues; it reads MSKRESSKYKIDRRMG. The tract at residues 1–46 is disordered; sequence MSKRESSKYKIDRRMGENIWGRPKSPVNRREYGPGQHGQRRKSKLS. The 64-residue stretch at 94–157 folds into the S4 RNA-binding domain; the sequence is SRLDAIVYRA…KQLVSVLESV (64 aa).

Belongs to the universal ribosomal protein uS4 family. In terms of assembly, part of the 30S ribosomal subunit. Contacts protein S5. The interaction surface between S4 and S5 is involved in control of translational fidelity.

In terms of biological role, one of the primary rRNA binding proteins, it binds directly to 16S rRNA where it nucleates assembly of the body of the 30S subunit. With S5 and S12 plays an important role in translational accuracy. This is Small ribosomal subunit protein uS4 from Sinorhizobium fredii (strain NBRC 101917 / NGR234).